Consider the following 82-residue polypeptide: Protein transport protein Sec61 subunit beta (82 aa).

Residue methionine 1 is modified to N-acetylmethionine. The interval 1-34 is disordered; sequence MVGSGAPQRGSAAATASMRRRKPTSGAGGGGASG. Over 1–55 the chain is Cytoplasmic; it reads MVGSGAPQRGSAAATASMRRRKPTSGAGGGGASGGAAGSMLQFYTDDAPGLKISP. The chain crosses the membrane as a helical span at residues 56 to 76; that stretch reads NVVLIMSIGFIAFVAVLHVMG.

Belongs to the SEC61-beta family. Heterotrimeric complex composed of SEC61-alpha, SEC61-beta and SEC61-gamma.

The protein localises to the endoplasmic reticulum membrane. In terms of biological role, necessary for protein translocation in the endoplasmic reticulum. This chain is Protein transport protein Sec61 subunit beta, found in Arabidopsis thaliana (Mouse-ear cress).